Reading from the N-terminus, the 215-residue chain is Large ribosomal subunit protein uL4 (215 aa).

Residues 46 to 72 (TAKSKNRAEVSGGGRKPWAQKGGGRAR) are disordered. The segment covering 56-71 (SGGGRKPWAQKGGGRA) has biased composition (gly residues).

The protein belongs to the universal ribosomal protein uL4 family. In terms of assembly, part of the 50S ribosomal subunit.

In terms of biological role, one of the primary rRNA binding proteins, this protein initially binds near the 5'-end of the 23S rRNA. It is important during the early stages of 50S assembly. It makes multiple contacts with different domains of the 23S rRNA in the assembled 50S subunit and ribosome. Functionally, forms part of the polypeptide exit tunnel. This is Large ribosomal subunit protein uL4 from Helicobacter pylori (strain Shi470).